The following is a 370-amino-acid chain: Aminomethyltransferase (370 aa).

This sequence belongs to the GcvT family. As to quaternary structure, the glycine cleavage system is composed of four proteins: P, T, L and H.

It carries out the reaction N(6)-[(R)-S(8)-aminomethyldihydrolipoyl]-L-lysyl-[protein] + (6S)-5,6,7,8-tetrahydrofolate = N(6)-[(R)-dihydrolipoyl]-L-lysyl-[protein] + (6R)-5,10-methylene-5,6,7,8-tetrahydrofolate + NH4(+). The glycine cleavage system catalyzes the degradation of glycine. This is Aminomethyltransferase from Clostridium botulinum (strain 657 / Type Ba4).